We begin with the raw amino-acid sequence, 475 residues long: Argininosuccinate lyase 1 (475 aa).

This sequence belongs to the lyase 1 family. Argininosuccinate lyase subfamily.

It localises to the cytoplasm. The enzyme catalyses 2-(N(omega)-L-arginino)succinate = fumarate + L-arginine. It functions in the pathway amino-acid biosynthesis; L-arginine biosynthesis; L-arginine from L-ornithine and carbamoyl phosphate: step 3/3. This Pseudomonas fluorescens (strain Pf0-1) protein is Argininosuccinate lyase 1.